A 1264-amino-acid chain; its full sequence is Box A-binding factor (1264 aa).

A compositionally biased stretch (basic and acidic residues) spans 1-11 (MTKTTKPKEKA). Disordered stretches follow at residues 1-25 (MTKTTKPKEKAAAGGAVIGSGSGLG), 161-200 (TASDTAATSEAAIDDDPSAINTNNNNNNSKAQNDASESVK), 234-253 (LISHHQQEQHQQAQQQQHQQ), 405-463 (QLHQ…HALS), 523-585 (NQTQ…SAAT), and 599-627 (HNSSLEDGYGSPRSSHSGGGGGGTLPAFQ). Positions 16-25 (AVIGSGSGLG) are enriched in gly residues. A compositionally biased stretch (low complexity) spans 161 to 171 (TASDTAATSEA). Over residues 189–198 (SKAQNDASES) the composition is skewed to polar residues. Over residues 409–421 (QQHHHQQQLHHHQ) the composition is skewed to basic residues. 3 stretches are compositionally biased toward low complexity: residues 422-438 (QQQQQLYHQQQQQQQQQ), 447-459 (STSSAGGDSPSSS), and 523-554 (NQTQAHLQQQHHQQQQQQHQQHQQQQLQQQQQ). The segment covering 555-564 (QHHHNQHQHH) has biased composition (basic residues). Low complexity-rich tracts occupy residues 565–585 (NSSSSSPGPAGLHHSSSSAAT) and 599–614 (HNSSLEDGYGSPRSSH). The GATA-type zinc-finger motif lies at 803-827 (CSNCHTTHTSLWRRNPAGEPVCNAC). 3 disordered regions span residues 841–867 (TMKKDTIQKRKRKPKGTKSEKSKSKSK), 899–1048 (DDMK…SNEN), and 1181–1202 (EEMDQSQQQQQQQQHQQQQHGE). Low complexity-rich tracts occupy residues 909-950 (PYNS…GSTS) and 985-1007 (QMSPLNMQQHQQQQSCSMQHSPS). A compositionally biased stretch (polar residues) spans 1008–1023 (TPTSIFNTPSPTHQLH). 2 stretches are compositionally biased toward low complexity: residues 1024-1048 (NNNNNNNNSSIFNNNNNNNSSSNEN) and 1185-1200 (QSQQQQQQQQHQQQQH). A phosphoserine mark is found at Ser-1208 and Ser-1210.

Interacts (via GATA-type Zn-finger domain) with Bfc; this interaction enhances srp binding to the promoter of crq/croquemort.

It localises to the nucleus. Its function is as follows. May function as a transcriptional activator protein and may play a key role in the organogenesis of the fat body. Binds a sequence element (5'-[TA]GATAA-3') found in the larval promoters of all known alcohol dehydrogenase (ADH) genes. Acts as a homeotic gene downstream of the terminal gap gene HKB to promote morphogenesis and differentiation of anterior and posterior midgut. Together with transcriptional cofactor Bfc directly binds the promoter of phagocytic receptor crq/croquemort to upregulate its expression and stimulate efferocytosis in response to apoptotic cells, including during embryogenesis. This Drosophila melanogaster (Fruit fly) protein is Box A-binding factor (srp).